A 139-amino-acid chain; its full sequence is Superoxide dismutase [Cu-Zn] (139 aa).

A lipid anchor (S-palmitoyl cysteine) is attached at Cys-6. Residues His-47 and His-49 each coordinate Cu cation. Zn(2+) is bound by residues His-72, His-81, and Asp-84. His-114 contacts Cu cation. Residues 118 to 129 (DDLGKGGNDESL) show a composition bias toward basic and acidic residues. The disordered stretch occupies residues 118 to 139 (DDLGKGGNDESLKTGNAGGRMA).

This sequence belongs to the Cu-Zn superoxide dismutase family. In terms of assembly, homodimer. Cu cation is required as a cofactor. It depends on Zn(2+) as a cofactor.

The protein localises to the cytoplasm. It is found in the nucleus. The enzyme catalyses 2 superoxide + 2 H(+) = H2O2 + O2. Its function is as follows. Destroys radicals which are normally produced within the cells and which are toxic to biological systems. This is Superoxide dismutase [Cu-Zn] (sod1) from Lampanyctus crocodilus (Jewel lanternfish).